We begin with the raw amino-acid sequence, 241 residues long: MSKDTIFSAPIEKLGDFTFDENVAEVFPDMIQRSVPGYSNIITAIGMLAERFVTPDSQVYDLGCSRGAATLSARRNIRQPNVTIIGVDNSQPMVERARQHLNAYHSDIPVEILCDDIRNISIENASMVILNFTLQFLPPEDRQSLLEKIYRGLNPGGLLVLSEKFRFKDDTTNNLLIELHHAFKRANGYSELEVSQKRAALENVMRIDSSNTHKVRLKNVGFSHVELWFQCFNFGSVIAIK.

Residues tyrosine 38, 63 to 65 (GCS), 88 to 89 (DN), 116 to 117 (DI), asparagine 131, and arginine 198 each bind S-adenosyl-L-methionine.

Belongs to the class I-like SAM-binding methyltransferase superfamily. Cx-SAM synthase family. As to quaternary structure, homodimer.

The catalysed reaction is prephenate + S-adenosyl-L-methionine = carboxy-S-adenosyl-L-methionine + 3-phenylpyruvate + H2O. Its function is as follows. Catalyzes the conversion of S-adenosyl-L-methionine (SAM) to carboxy-S-adenosyl-L-methionine (Cx-SAM). The protein is Carboxy-S-adenosyl-L-methionine synthase of Actinobacillus succinogenes (strain ATCC 55618 / DSM 22257 / CCUG 43843 / 130Z).